The sequence spans 145 residues: D-aminoacyl-tRNA deacylase (145 aa).

The short motif at 137-138 (GP) is the Gly-cisPro motif, important for rejection of L-amino acids element.

Belongs to the DTD family. As to quaternary structure, homodimer.

The protein resides in the cytoplasm. The catalysed reaction is glycyl-tRNA(Ala) + H2O = tRNA(Ala) + glycine + H(+). It catalyses the reaction a D-aminoacyl-tRNA + H2O = a tRNA + a D-alpha-amino acid + H(+). In terms of biological role, an aminoacyl-tRNA editing enzyme that deacylates mischarged D-aminoacyl-tRNAs. Also deacylates mischarged glycyl-tRNA(Ala), protecting cells against glycine mischarging by AlaRS. Acts via tRNA-based rather than protein-based catalysis; rejects L-amino acids rather than detecting D-amino acids in the active site. By recycling D-aminoacyl-tRNA to D-amino acids and free tRNA molecules, this enzyme counteracts the toxicity associated with the formation of D-aminoacyl-tRNA entities in vivo and helps enforce protein L-homochirality. The protein is D-aminoacyl-tRNA deacylase of Pseudomonas fluorescens (strain Pf0-1).